A 464-amino-acid chain; its full sequence is MPEDTSYSNSFEDYYNNSHAISPYKDSFYKEMTPSKPNVRFGDDDVNIFDQRKKVNEINKNNTVKRSIPSSISTTITPNKSSLKSPRGKRASKNSFDNETKLESKNETLKEVNDAVNRCYALCNIPTKHVSINSISDLAQTFETLAVGITHETNRKAECERSKNAIDSLYYHEQLEKKELNEKSLQMAIDHLLKVTKQNLRQADDGNKLKETEALKSFIEEIEEVDDNKISINSLQQQLLEEKTANNILRRDYYKLQERGRRLCHEFQELQDDYSKQMKQKEYEVQKLKNEIKVLLNMNDNLKAEKAHYSQKEKQYFQKYTYIEKYMNHVKEEYNRKEDECKKLNFIIDKSMKKIEHLERSLQTQFTAQNSFSTAMIQEEGPKDAHLKDRYHKVKEFMEQKLQTSKINDPSCSEAEALDNVLCLIESSMKTLDKNSKCYPIATKKCIKYVTDSPRLKENEHVTN.

The tract at residues 71 to 102 (SISTTITPNKSSLKSPRGKRASKNSFDNETKL) is disordered. Coiled coils occupy residues 99-119 (ETKLESKNETLKEVNDAVNRC), 156-193 (KAECERSKNAIDSLYYHEQLEKKELNEKSLQMAIDHLL), and 231-365 (SINS…LQTQ).

Interacts directly with SPO21/MPC70, NUD1, SPO74 and SPC42. Probable component of a spindle pole body (SPB) complex composed of ADY3, SSP1, DON1, MPC54, SPO21/MPC70, NUD1 and CNM67.

The protein localises to the prospore membrane. It localises to the cytoplasm. It is found in the cytoskeleton. The protein resides in the microtubule organizing center. Its subcellular location is the spindle pole body. The protein localises to the spindle pole. Involved in the pathway that organizes the shaping and sizing of the prospore membrane (PSM) during sporulation. The chain is Meiotic plaque component protein 54 (MPC54) from Saccharomyces cerevisiae (strain ATCC 204508 / S288c) (Baker's yeast).